We begin with the raw amino-acid sequence, 425 residues long: Serine--tRNA ligase (425 aa).

229–231 is a binding site for L-serine; it reads TAE. Position 260 to 262 (260 to 262) interacts with ATP; it reads RSE. E283 contacts L-serine. 347-350 serves as a coordination point for ATP; the sequence is EISS. Residue S384 coordinates L-serine.

The protein belongs to the class-II aminoacyl-tRNA synthetase family. Type-1 seryl-tRNA synthetase subfamily. In terms of assembly, homodimer. The tRNA molecule binds across the dimer.

The protein localises to the cytoplasm. The enzyme catalyses tRNA(Ser) + L-serine + ATP = L-seryl-tRNA(Ser) + AMP + diphosphate + H(+). It carries out the reaction tRNA(Sec) + L-serine + ATP = L-seryl-tRNA(Sec) + AMP + diphosphate + H(+). Its pathway is aminoacyl-tRNA biosynthesis; selenocysteinyl-tRNA(Sec) biosynthesis; L-seryl-tRNA(Sec) from L-serine and tRNA(Sec): step 1/1. Its function is as follows. Catalyzes the attachment of serine to tRNA(Ser). Is also able to aminoacylate tRNA(Sec) with serine, to form the misacylated tRNA L-seryl-tRNA(Sec), which will be further converted into selenocysteinyl-tRNA(Sec). This chain is Serine--tRNA ligase, found in Rhizorhabdus wittichii (strain DSM 6014 / CCUG 31198 / JCM 15750 / NBRC 105917 / EY 4224 / RW1) (Sphingomonas wittichii).